The chain runs to 289 residues: Fatty acid elongase 3-like (289 aa).

Helical transmembrane passes span 35–55 (SFLF…HILL), 75–95 (SLLM…SAAA), 129–149 (VFFW…RTIF), 157–176 (LAVS…FLWL), 181–203 (SYQI…YRFW), 205–225 (GFGL…LVLV), and 248–268 (IGAW…FLNF).

It belongs to the ELO family.

The protein resides in the membrane. Its function is as follows. Probable very long-chain fatty acid (VLCFA) elongase that controls VLCFA composition and functions to inhibit abscisic acid (ABA)-mediated stress responses, including regulation of stomatal aperture, maintenance of primary root growth and inhibition of germination. VLCFA pathway and products may function as signaling components acting upstream of sphingosine-1-phosphate, ceramide and the heterotrimeric G-protein complex, in lipid-mediated regulation of abiotic stress signaling. This chain is Fatty acid elongase 3-like (HOS3), found in Arabidopsis thaliana (Mouse-ear cress).